A 310-amino-acid polypeptide reads, in one-letter code: MKSKIYKIISLYSFFPFQEKLIIDLKNKLLEIENENDLSGLLIFAREGINGTICAEKNVIDIVINLINKYADYRNLNIKVNFSKKKVFKKLKIKIKKEIVTMGVPEINPSENNGTYIDSTDWNKLIKNQNTIVIDTRNHYEVSIGTFQNSINPNTRNFSEFPKWVDDHLDNHLEDKESTNIAMFCTGGIRCEKATSLLKKKGYKNIYHLQGGILQYLDEISKEENLFEGECYVFDKRVALDQELEKGSYSICHACGMPVSIQDQKRKEYRKGIQCHFCIDQFSDDDRKRFEERQKQIDRLKVENHKIYKD.

Residues 127–225 enclose the Rhodanese domain; the sequence is KNQNTIVIDT…YLDEISKEEN (99 aa). Catalysis depends on C185, which acts as the Cysteine persulfide intermediate.

This sequence belongs to the TrhO family.

It carries out the reaction uridine(34) in tRNA + AH2 + O2 = 5-hydroxyuridine(34) in tRNA + A + H2O. In terms of biological role, catalyzes oxygen-dependent 5-hydroxyuridine (ho5U) modification at position 34 in tRNAs. The sequence is that of tRNA uridine(34) hydroxylase from Prochlorococcus marinus (strain MIT 9215).